Here is a 26-residue protein sequence, read N- to C-terminus: Morintide mO4 (26 aa).

The Chitin-binding type-1 domain occupies 1–26 (NRLCCSQYGFCGTTSEYCSRVSGCQS). A disulfide bond links Cys-4 and Cys-18.

As to expression, seeds (at protein level).

In terms of biological role, chitin-binding protein which functions in defense against chitin-containing fungal pathogens. This Moringa oleifera (Horseradish tree) protein is Morintide mO4.